The sequence spans 254 residues: Peptide methionine sulfoxide reductase A5 (254 aa).

The N-terminal stretch at 1-26 is a signal peptide; the sequence is MARGSAAAAIAGVVWVLLLLVGVASG.

It belongs to the MsrA Met sulfoxide reductase family.

The catalysed reaction is L-methionyl-[protein] + [thioredoxin]-disulfide + H2O = L-methionyl-(S)-S-oxide-[protein] + [thioredoxin]-dithiol. The enzyme catalyses [thioredoxin]-disulfide + L-methionine + H2O = L-methionine (S)-S-oxide + [thioredoxin]-dithiol. Its function is as follows. Catalyzes the reduction of methionine sulfoxide (MetSO) to methionine in proteins. Plays a protective role against oxidative stress by restoring activity to proteins that have been inactivated by methionine oxidation. MSRA family specifically reduces the MetSO S-enantiomer. The protein is Peptide methionine sulfoxide reductase A5 (MSRA5) of Oryza sativa subsp. japonica (Rice).